Reading from the N-terminus, the 261-residue chain is MRIALGIEYDGNGYFGWQRQAEVDSVQAQLERALSIVANEPIGVFCAGRTDAGVHATGQVVHFETQAIRNEGAWTLGVNANLPDNIAVRWVKEVDDSFHARFSATARRYRYVIYNHSFRPGILRHGVSHYHGDIDADRMHQAAQALLGEQDFTSFRAVQCQSKTPFRNVHCVNVTRQGMYVIVDIAANAFLHHMVRNIVGSLLEIGLGNQPLTWMGDLLALKDRNQAAATAKPHGLYLVDVTYPEQYQLPKLALGPLFMLD.

The active-site Nucleophile is the D51. Y109 contributes to the substrate binding site.

The protein belongs to the tRNA pseudouridine synthase TruA family. Homodimer.

The enzyme catalyses uridine(38/39/40) in tRNA = pseudouridine(38/39/40) in tRNA. Formation of pseudouridine at positions 38, 39 and 40 in the anticodon stem and loop of transfer RNAs. The protein is tRNA pseudouridine synthase A of Shewanella baltica (strain OS155 / ATCC BAA-1091).